The chain runs to 245 residues: Probable transcriptional regulatory protein Ddes_0536 (245 aa).

A disordered region spans residues 1–21 (MAGHSKWANIQHRKGRQDAKR).

It belongs to the TACO1 family.

Its subcellular location is the cytoplasm. The protein is Probable transcriptional regulatory protein Ddes_0536 of Desulfovibrio desulfuricans (strain ATCC 27774 / DSM 6949 / MB).